Here is a 187-residue protein sequence, read N- to C-terminus: Urease accessory protein UreE (187 aa).

A disordered region spans residues 154-187 (RANSAQGHGHSHGHSHSHDHHGYHHHGDGNWHKH). The segment covering 162 to 177 (GHSHGHSHSHDHHGYH) has biased composition (basic residues). Basic and acidic residues predominate over residues 178-187 (HHGDGNWHKH).

It belongs to the UreE family.

The protein resides in the cytoplasm. Its function is as follows. Involved in urease metallocenter assembly. Binds nickel. Probably functions as a nickel donor during metallocenter assembly. This Actinobacillus pleuropneumoniae (Haemophilus pleuropneumoniae) protein is Urease accessory protein UreE.